The chain runs to 583 residues: Ras-specific guanine nucleotide-releasing factor RalGPS2 (583 aa).

One can recognise a Ras-GEF domain in the interval 49 to 287 (TPEEYAGQIT…YKLSLKIEPG (239 aa)). Positions 283–314 (KIEPGTSTPRSAASREDLVGPEVGASPQSGRK) are disordered. Phosphoserine is present on residues S293, S296, S308, and S311. Positions 324–327 (PQTP) match the PXXP motif. T326 is modified (phosphothreonine). S329 and S343 each carry phosphoserine. T361 carries the phosphothreonine modification. The interval 372 to 406 (DDSVMEPHAPSRGQAESSTLSSGISIGSSDGSELS) is disordered. Phosphoserine is present on S374. The span at 387 to 403 (ESSTLSSGISIGSSDGS) shows a compositional bias: low complexity. S422 is subject to Phosphoserine. Residues 457 to 569 (AVTIQGVLRR…WFKHLSAACQ (113 aa)) form the PH domain. A required for stimulation of nucleotide exchange by RALA region spans residues 459–583 (TIQGVLRRKT…QVPTNLMTFE (125 aa)).

As to quaternary structure, interacts with the SH3 domains of GRB2 and PLCG1. Interacts with RALA.

Its subcellular location is the cytoplasm. It localises to the cell membrane. In terms of biological role, guanine nucleotide exchange factor for the small GTPase RALA. May be involved in cytoskeletal organization. May also be involved in the stimulation of transcription in a Ras-independent fashion. The sequence is that of Ras-specific guanine nucleotide-releasing factor RalGPS2 (RALGPS2) from Homo sapiens (Human).